Consider the following 974-residue polypeptide: Localization factor PodJL (974 aa).

Coiled coils occupy residues 81–163 (DEVG…EAAG), 218–320 (VARL…SAQA), and 375–469 (QAQA…LEAA). Disordered stretches follow at residues 460-497 (SEAQRKLEAAPPSPPPAQAPAPVATAQRPVPPAASPFE) and 589-611 (AAARAAAASEGKGGKAKSAKKEK). Residues 589–598 (AAARAAAASE) are compositionally biased toward low complexity. The chain crosses the membrane as a helical span at residues 642-662 (ALVVFAAAGALGAGVGGLLLL). Sel1-like repeat units lie at residues 757–793 (PAAQFYLSKMYEGGKNGVKVDMAEARRWSERAANGGD), 794–829 (PRAMHNLALYYFKGEGGPRNSTTAASWFRKAADMGL), and 830–865 (VDSQFNLAQLYESGLGVSQNPAEAYKWYVIAGRAGD).

Post-translationally, two isoforms exist, the full-length translation product PodJL and a C-terminal truncated form PodJS. Both appear during a specific time period of the cell cycle to control different aspects of polar organelle development.

Its subcellular location is the membrane. In terms of biological role, podJL provides the positional information for the localization of several polar organelles (pili, adhesive holdfast and chemotactic apparatus) by recruiting structural (CpaE) and regulatory (PleC) proteins to a specific cell pole. This is Localization factor PodJL (podJ) from Caulobacter vibrioides (strain ATCC 19089 / CIP 103742 / CB 15) (Caulobacter crescentus).